The sequence spans 290 residues: 4-hydroxybenzoate octaprenyltransferase (290 aa).

8 consecutive transmembrane segments (helical) span residues 23–43, 46–66, 99–119, 141–161, 163–183, 213–233, 234–254, and 268–288; these read IGAL…TPGV, LWIL…GCVV, LFVV…TMTI, LPQV…FAAV, ESVP…AVAY, LIIG…GELN, GLGW…VYQQ, and AFMN…MSYW.

The protein belongs to the UbiA prenyltransferase family. It depends on Mg(2+) as a cofactor.

It localises to the cell inner membrane. It carries out the reaction all-trans-octaprenyl diphosphate + 4-hydroxybenzoate = 4-hydroxy-3-(all-trans-octaprenyl)benzoate + diphosphate. It participates in cofactor biosynthesis; ubiquinone biosynthesis. Its function is as follows. Catalyzes the prenylation of para-hydroxybenzoate (PHB) with an all-trans polyprenyl group. Mediates the second step in the final reaction sequence of ubiquinone-8 (UQ-8) biosynthesis, which is the condensation of the polyisoprenoid side chain with PHB, generating the first membrane-bound Q intermediate 3-octaprenyl-4-hydroxybenzoate. This is 4-hydroxybenzoate octaprenyltransferase from Escherichia coli (strain UTI89 / UPEC).